The primary structure comprises 232 residues: 2,3,4,5-tetrahydropyridine-2,6-dicarboxylate N-acetyltransferase (232 aa).

It belongs to the transferase hexapeptide repeat family. DapH subfamily.

The enzyme catalyses (S)-2,3,4,5-tetrahydrodipicolinate + acetyl-CoA + H2O = L-2-acetamido-6-oxoheptanedioate + CoA. It participates in amino-acid biosynthesis; L-lysine biosynthesis via DAP pathway; LL-2,6-diaminopimelate from (S)-tetrahydrodipicolinate (acetylase route): step 1/3. In terms of biological role, catalyzes the transfer of an acetyl group from acetyl-CoA to tetrahydrodipicolinate. The chain is 2,3,4,5-tetrahydropyridine-2,6-dicarboxylate N-acetyltransferase from Streptococcus mutans serotype c (strain ATCC 700610 / UA159).